Reading from the N-terminus, the 569-residue chain is Acetate/butyrate--CoA ligase AAE7, peroxisomal (569 aa).

The Microbody targeting signal signature appears at 567–569 (SRL).

Belongs to the ATP-dependent AMP-binding enzyme family. In terms of tissue distribution, expressed in roots, leaves, stems, flowers and developing seeds.

The protein localises to the peroxisome. The enzyme catalyses acetate + ATP + CoA = acetyl-CoA + AMP + diphosphate. It carries out the reaction a medium-chain fatty acid + ATP + CoA = a medium-chain fatty acyl-CoA + AMP + diphosphate. In terms of biological role, peroxisomal acetate/butyrate--CoA ligase that is probably involved in the activation of exogenous acetate for entry into the glyoxylate cycle. May play a role to prevent carbon loss from peroxisomes during lipid mobilization. In vitro, is active with both acetate and butyrate. The sequence is that of Acetate/butyrate--CoA ligase AAE7, peroxisomal (AAE7) from Arabidopsis thaliana (Mouse-ear cress).